Here is a 205-residue protein sequence, read N- to C-terminus: Proteasome subunit beta type-3 (205 aa).

Serine 2 is subject to N-acetylserine. Residue lysine 77 is modified to N6-acetyllysine.

The protein belongs to the peptidase T1B family. In terms of assembly, the 26S proteasome consists of a 20S proteasome core and two 19S regulatory subunits. The 20S proteasome core is a barrel-shaped complex made of 28 subunits that are arranged in four stacked rings. The two outer rings are each formed by seven alpha subunits, and the two inner rings are formed by seven beta subunits. The proteolytic activity is exerted by three beta-subunits PSMB5, PSMB6 and PSMB7. As to expression, detected in liver (at protein level).

It is found in the cytoplasm. It localises to the nucleus. Functionally, non-catalytic component of the 20S core proteasome complex involved in the proteolytic degradation of most intracellular proteins. This complex plays numerous essential roles within the cell by associating with different regulatory particles. Associated with two 19S regulatory particles, forms the 26S proteasome and thus participates in the ATP-dependent degradation of ubiquitinated proteins. The 26S proteasome plays a key role in the maintenance of protein homeostasis by removing misfolded or damaged proteins that could impair cellular functions, and by removing proteins whose functions are no longer required. Associated with the PA200 or PA28, the 20S proteasome mediates ubiquitin-independent protein degradation. This type of proteolysis is required in several pathways including spermatogenesis (20S-PA200 complex) or generation of a subset of MHC class I-presented antigenic peptides (20S-PA28 complex). This is Proteasome subunit beta type-3 (Psmb3) from Mus musculus (Mouse).